We begin with the raw amino-acid sequence, 253 residues long: 5'-nucleotidase SurE (253 aa).

D8, D9, S39, and N95 together coordinate a divalent metal cation.

It belongs to the SurE nucleotidase family. A divalent metal cation is required as a cofactor.

It localises to the cytoplasm. It carries out the reaction a ribonucleoside 5'-phosphate + H2O = a ribonucleoside + phosphate. In terms of biological role, nucleotidase that shows phosphatase activity on nucleoside 5'-monophosphates. The chain is 5'-nucleotidase SurE from Kosmotoga olearia (strain ATCC BAA-1733 / DSM 21960 / TBF 19.5.1).